We begin with the raw amino-acid sequence, 420 residues long: 3-isopropylmalate dehydratase large subunit (420 aa).

Residues Cys301, Cys361, and Cys364 each coordinate [4Fe-4S] cluster.

This sequence belongs to the aconitase/IPM isomerase family. LeuC type 2 subfamily. As to quaternary structure, heterodimer of LeuC and LeuD. [4Fe-4S] cluster serves as cofactor.

The catalysed reaction is (2R,3S)-3-isopropylmalate = (2S)-2-isopropylmalate. The protein operates within amino-acid biosynthesis; L-leucine biosynthesis; L-leucine from 3-methyl-2-oxobutanoate: step 2/4. Its function is as follows. Catalyzes the isomerization between 2-isopropylmalate and 3-isopropylmalate, via the formation of 2-isopropylmaleate. This chain is 3-isopropylmalate dehydratase large subunit, found in Desulfovibrio desulfuricans (strain ATCC 27774 / DSM 6949 / MB).